Here is a 342-residue protein sequence, read N- to C-terminus: N-acetyl-gamma-glutamyl-phosphate reductase (342 aa).

Cys149 is a catalytic residue.

It belongs to the NAGSA dehydrogenase family. Type 1 subfamily.

The protein localises to the cytoplasm. The enzyme catalyses N-acetyl-L-glutamate 5-semialdehyde + phosphate + NADP(+) = N-acetyl-L-glutamyl 5-phosphate + NADPH + H(+). It functions in the pathway amino-acid biosynthesis; L-arginine biosynthesis; N(2)-acetyl-L-ornithine from L-glutamate: step 3/4. Its function is as follows. Catalyzes the NADPH-dependent reduction of N-acetyl-5-glutamyl phosphate to yield N-acetyl-L-glutamate 5-semialdehyde. In Nitrosomonas europaea (strain ATCC 19718 / CIP 103999 / KCTC 2705 / NBRC 14298), this protein is N-acetyl-gamma-glutamyl-phosphate reductase.